The following is a 291-amino-acid chain: Beta-lactamase CTX-M-1 (291 aa).

Positions 1 to 28 are cleaved as a signal peptide; sequence MVKKSLRQFTLMATATVTLLLGSVPLYA. The Nucleophile; acyl-ester intermediate role is filled by Ser73. A beta-lactam contacts are provided by Lys76, Ser133, Glu169, and Ser240. Glu169 acts as the Proton acceptor in catalysis.

Belongs to the class-A beta-lactamase family. Monomer.

Its subcellular location is the secreted. It catalyses the reaction a beta-lactam + H2O = a substituted beta-amino acid. Its activity is regulated as follows. Inhibited by the beta-lactamase-blocking agent clavulanic acid; in the TG1 strain. In terms of biological role, extended-spectrum beta-lactamase (ESBL) which confers resistance to penicillins, as well as first, second and third-generation cephalosporins. Has cefotaxime-hydrolyzing activity. Inactive against the cephamycin antibiotic, cefoxitin, or against the carbapenem, imipenem. This is Beta-lactamase CTX-M-1 from Escherichia coli.